A 480-amino-acid chain; its full sequence is Ammonium transporter 3 member 3 (480 aa).

11 helical membrane-spanning segments follow: residues 31–51 (SATL…GSIV), 59–79 (SAFM…VWAY), 135–155 (MVYF…GSLL), 169–189 (LWIT…GFLF), 198–218 (GGYV…YWVG), 233–253 (ILLV…FNGG), 265–287 (AVLN…DVFF), 292–314 (SVIG…AGLV), 318–337 (AAIV…MMVL), 361–381 (GFLG…SLFL), and 407–427 (LFVT…ISLI).

The protein belongs to the ammonia transporter channel (TC 1.A.11.2) family.

It is found in the membrane. Involved in ammonium transport. The protein is Ammonium transporter 3 member 3 (AMT3-3) of Oryza sativa subsp. japonica (Rice).